A 405-amino-acid chain; its full sequence is Multidrug resistance protein MdtH (405 aa).

Transmembrane regions (helical) follow at residues 13–33, 34–54, 78–95, 99–116, 139–159, 165–185, 213–233, 243–263, 277–297, 299–319, 340–360, and 365–385; these read YFLLMDNMLVVMGFYVVFPLI, SIRFVDQLGWAALLVGIALGL, MIIAGMLMRALGFVLMGI, PWLLWLSCALSALGGTLF, LLMMQDSACSVIGALLGSWLL, LVCLAGAVLFVFAAIFNAWLL, YVLTLTGYYMLSVQVMLMLPI, AAVKWMYAIEAALSLSLLYPI, LMAGLTVMLLSLFPIGLIEDL, ALFMLIGLFYIGSIIAEPARE, LGLALGGAIGYSGGGWLYDVG, and IPQLPWFMLGLIGFITLLGLY.

The protein belongs to the major facilitator superfamily. DHA1 family. MdtH (TC 2.A.1.2.21) subfamily.

The protein localises to the cell inner membrane. The polypeptide is Multidrug resistance protein MdtH (Sodalis glossinidius (strain morsitans)).